Here is an 824-residue protein sequence, read N- to C-terminus: Glycerol-3-phosphate acyltransferase (824 aa).

The HXXXXD motif motif lies at 302 to 307; sequence CHRSHM.

Belongs to the GPAT/DAPAT family.

It localises to the cell inner membrane. The catalysed reaction is sn-glycerol 3-phosphate + an acyl-CoA = a 1-acyl-sn-glycero-3-phosphate + CoA. The protein operates within phospholipid metabolism; CDP-diacylglycerol biosynthesis; CDP-diacylglycerol from sn-glycerol 3-phosphate: step 1/3. This chain is Glycerol-3-phosphate acyltransferase, found in Actinobacillus pleuropneumoniae serotype 3 (strain JL03).